The sequence spans 367 residues: tRNA-specific 2-thiouridylase MnmA (367 aa).

ATP is bound by residues 12–19 and M38; that span reads GMSGGVDS. Residues 98–100 are interaction with target base in tRNA; that stretch reads NPD. C103 functions as the Nucleophile in the catalytic mechanism. C103 and C200 are joined by a disulfide. Residue G128 coordinates ATP. The tract at residues 150–152 is interaction with tRNA; that stretch reads KDQ. C200 functions as the Cysteine persulfide intermediate in the catalytic mechanism. The interaction with tRNA stretch occupies residues 312 to 313; sequence RY.

The protein belongs to the MnmA/TRMU family. As to quaternary structure, interacts with TusE.

The protein localises to the cytoplasm. It catalyses the reaction S-sulfanyl-L-cysteinyl-[protein] + uridine(34) in tRNA + AH2 + ATP = 2-thiouridine(34) in tRNA + L-cysteinyl-[protein] + A + AMP + diphosphate + H(+). Its function is as follows. Catalyzes the 2-thiolation of uridine at the wobble position (U34) of tRNA(Lys), tRNA(Glu) and tRNA(Gln), leading to the formation of s(2)U34, the first step of tRNA-mnm(5)s(2)U34 synthesis. Sulfur is provided by IscS, via a sulfur-relay system. Binds ATP and its substrate tRNAs. In Photorhabdus laumondii subsp. laumondii (strain DSM 15139 / CIP 105565 / TT01) (Photorhabdus luminescens subsp. laumondii), this protein is tRNA-specific 2-thiouridylase MnmA.